The following is a 291-amino-acid chain: B-lymphocyte antigen CD20 (291 aa).

The Cytoplasmic segment spans residues 1 to 44; the sequence is MSGPFPAEPTKGPLAMQPAPKVNLKRTSSLVGPTQSFFMRESKA. Ser-29 is modified (phosphoserine). A helical transmembrane segment spans residues 45 to 65; that stretch reads LGAVQIMNGLFHITLGGLLMI. At 66-68 the chain is on the extracellular side; it reads PTG. The chain crosses the membrane as a helical span at residues 69 to 89; it reads VFAPICLSVWYPLWGGIMYII. Residues 90 to 111 lie on the Cytoplasmic side of the membrane; that stretch reads SGSLLAAAAEKTSRKSLVKAKV. A helical membrane pass occupies residues 112–132; the sequence is IMSSLSLFAAISGIILSIMDI. The Extracellular segment spans residues 133-182; that stretch reads LNMTLSHFLKMRRLELIQTSKPYVDIYDCEPSNSSEKNSPSTQYCNSIQS. A helical transmembrane segment spans residues 183–203; the sequence is VFLGILSAMLISAFFQKLVTA. Residues 204–291 lie on the Cytoplasmic side of the membrane; the sequence is GIVENEWKRM…SLPVENEIAP (88 aa). Residue Cys-214 is the site of S-palmitoyl cysteine attachment. At Ser-219 the chain carries Phosphoserine. The residue at position 233 (Thr-233) is a Phosphothreonine. Positions 261–270 are enriched in acidic residues; sequence VQEEEEEEAE. Positions 261–291 are disordered; it reads VQEEEEEEAEINFPAPPQEQESLPVENEIAP.

It belongs to the MS4A family. As to quaternary structure, forms homotetramers. Interacts with the heavy and light chains of cell surface IgM, the antigen-binding components of the BCR. In terms of processing, phosphorylated.

It is found in the cell membrane. Its function is as follows. B-lymphocyte-specific membrane protein that plays a role in the regulation of cellular calcium influx necessary for the development, differentiation, and activation of B-lymphocytes. Functions as a store-operated calcium (SOC) channel component promoting calcium influx after activation by the B-cell receptor/BCR. The chain is B-lymphocyte antigen CD20 (Ms4a1) from Mus musculus (Mouse).